The following is a 684-amino-acid chain: Probable potassium transport system protein Kup (684 aa).

Helical transmembrane passes span 19–39 (ALLV…LYVM), 61–81 (VSLI…LIAL), 104–124 (WLVL…MLTP), 151–171 (QVIW…RFGT), 177–197 (AFGP…FIAL), 223–243 (MGLF…ALYS), 255–275 (LSWP…AVWL), 303–323 (LGAI…LISG), 352–372 (LYIP…IGYF), 381–401 (AYGL…YQYL), 407–427 (PAVV…VFFI), and 433–453 (FLHG…VMYV).

The protein belongs to the HAK/KUP transporter (TC 2.A.72) family.

The protein resides in the cell membrane. It catalyses the reaction K(+)(in) + H(+)(in) = K(+)(out) + H(+)(out). Its function is as follows. Transport of potassium into the cell. Likely operates as a K(+):H(+) symporter. In Lacticaseibacillus paracasei (strain ATCC 334 / BCRC 17002 / CCUG 31169 / CIP 107868 / KCTC 3260 / NRRL B-441) (Lactobacillus paracasei), this protein is Probable potassium transport system protein Kup.